Reading from the N-terminus, the 622-residue chain is Low affinity potassium transport system protein Kup (622 aa).

The next 12 helical transmembrane spans lie at 9–29, 49–69, 101–121, 137–157, 165–185, 212–232, 247–267, 279–299, 337–357, 363–383, 397–417, and 419–439; these read LPAV…TSPL, VFGF…LKYL, VLVI…VITP, PSMD…LFII, VGKL…VLGA, AVSF…EALY, WFTV…ALLL, LLAP…ATII, IYIP…IVSF, LAAA…ILFC, AWVL…ANVV, and ILSG…IMTT.

The protein belongs to the HAK/KUP transporter (TC 2.A.72) family.

It is found in the cell inner membrane. It carries out the reaction K(+)(in) + H(+)(in) = K(+)(out) + H(+)(out). In terms of biological role, responsible for the low-affinity transport of potassium into the cell. Likely operates as a K(+):H(+) symporter. This Pectobacterium carotovorum subsp. carotovorum (strain PC1) protein is Low affinity potassium transport system protein Kup.